The sequence spans 111 residues: uncharacterized protein (111 aa).

The disordered stretch occupies residues Pro66–Ser94. A compositionally biased stretch (polar residues) spans Ala70 to Ala83.

Its subcellular location is the plastid. The protein localises to the chloroplast. This is an uncharacterized protein from Chlamydomonas reinhardtii (Chlamydomonas smithii).